A 645-amino-acid polypeptide reads, in one-letter code: Transcription termination factor FttA (645 aa).

The KHa stretch occupies residues 10–77 (APSNQNIMAT…IIVRIDESVR (68 aa)). The tract at residues 78–146 (KKEEDARKML…WTLRIRKATT (69 aa)) is KHb. A metallo-beta-lactamase N-terminus region spans residues 187–391 (EISLTALGGF…LLIESTYGAK (205 aa)). Zn(2+) is bound by residues His-250, His-252, Asp-254, His-255, His-337, and Asp-360. The interval 392-586 (EDIQPTRQEV…CRMEKLDGFS (195 aa)) is beta-Casp. The segment at 587–645 (GHSDYNQLTGFVQKLRPKLRRVLVNHGERRKSENLALAVRRMFRIPAHYPQIQESIKLF) is metallo-beta-lactamase C-terminus. A Zn(2+)-binding site is contributed by His-612.

It belongs to the metallo-beta-lactamase superfamily. RNA-metabolizing metallo-beta-lactamase-like family. FttA subfamily. As to quaternary structure, homodimer. Interacts with RNA polymerase (RNAP), interacts with the Spt4-Spt5 complex. It depends on Zn(2+) as a cofactor.

Terminates transcription on the whole genome. Termination is linked to FttA-mediated RNA cleavage and does not require NTP hydrolysis. Cleaves endonucleolytically at the RNA exit channel of RNA polymerase (RNAP); the 5'-3' exonuclease activity of this protein degrades the nascent RNA released from RNAP. In terms of biological role, terminates transcription genome-wide in M.maripaludis. Restores wild-type growth to a strain of Methanococcus maripaludis depleted for this gene at 22 degrees Celsius and prevents transcriptional read-through. Transcription termination is most effective in vivo on RNAs with more than one U4-tract in their 3'-ends. Has endonuclease activity after U-rich tracts in transcription termination sequences. The sequence is that of Transcription termination factor FttA from Cenarchaeum symbiosum (strain A).